The sequence spans 237 residues: Class B acid phosphatase (237 aa).

The signal sequence occupies residues 1 to 25; it reads MRKVSLALSAACLLFTLNYTASALA. D69 (nucleophile) is an active-site residue. The Mg(2+) site is built by D69 and D71. Residue D71 is the Proton donor of the active site. Substrate-binding positions include 137 to 138 and K177; that span reads TG. A Mg(2+)-binding site is contributed by D192.

This sequence belongs to the class B bacterial acid phosphatase family. Homotetramer. The cofactor is Mg(2+).

It is found in the periplasm. It carries out the reaction a phosphate monoester + H2O = an alcohol + phosphate. Its function is as follows. Dephosphorylates several organic phosphate monoesters. Also has a phosphotransferase activity catalyzing the transfer of low-energy phosphate groups from organic phosphate monoesters to free hydroxyl groups of various organic compounds. This is Class B acid phosphatase from Citrobacter rodentium (strain ICC168) (Citrobacter freundii biotype 4280).